A 210-amino-acid chain; its full sequence is Syntaxin-binding protein 6 (210 aa).

The residue at position 2 (serine 2) is an N-acetylserine. The v-SNARE coiled-coil homology domain occupies 151-210 (GNSILHSAADSVTSAVQKASQALNERGERLGRAEEKTEDMKNSAQQFAETAHKLAMKHKC).

In terms of assembly, part of a ternary complex containing SNAP25 and STX1A that can be dissociated by NAPA and NSF. Interacts with STX4A.

It is found in the cytoplasm. The protein resides in the membrane. Functionally, forms non-fusogenic complexes with SNAP25 and STX1A and may thereby modulate the formation of functional SNARE complexes and exocytosis. This Mus musculus (Mouse) protein is Syntaxin-binding protein 6 (Stxbp6).